Reading from the N-terminus, the 194-residue chain is NADH-quinone oxidoreductase subunit B 1 (194 aa).

4 residues coordinate [4Fe-4S] cluster: Cys47, Cys48, Cys113, and Cys142.

This sequence belongs to the complex I 20 kDa subunit family. As to quaternary structure, NDH-1 is composed of 14 different subunits. Subunits NuoB, C, D, E, F, and G constitute the peripheral sector of the complex. It depends on [4Fe-4S] cluster as a cofactor.

It localises to the cell inner membrane. It catalyses the reaction a quinone + NADH + 5 H(+)(in) = a quinol + NAD(+) + 4 H(+)(out). NDH-1 shuttles electrons from NADH, via FMN and iron-sulfur (Fe-S) centers, to quinones in the respiratory chain. The immediate electron acceptor for the enzyme in this species is believed to be ubiquinone. Couples the redox reaction to proton translocation (for every two electrons transferred, four hydrogen ions are translocated across the cytoplasmic membrane), and thus conserves the redox energy in a proton gradient. In Sorangium cellulosum (strain So ce56) (Polyangium cellulosum (strain So ce56)), this protein is NADH-quinone oxidoreductase subunit B 1.